We begin with the raw amino-acid sequence, 318 residues long: Leucine-rich repeat domain-containing protein YddK (318 aa).

9 LRR repeats span residues 109–129, 130–151, 153–173, 174–194, 195–216, 217–237, 238–258, 260–280, and 284–305; these read NFTS…TNYD, RLVK…QGRN, SITH…DRLS, SVTY…ESCE, WLQY…NKNE, LLLL…LFPN, LNTL…YSNF, NVQT…DFLT, and SIKS…NTSD.

The protein is Leucine-rich repeat domain-containing protein YddK (yddK) of Escherichia coli (strain K12).